The chain runs to 785 residues: B-cell scaffold protein with ankyrin repeats (785 aa).

Positions 1-154 are interaction with ITPR2; sequence MLPAAPGKGL…DYISVIQSII (154 aa). The TIR domain maps to 25-153; sequence NTKDIIMIYE…EDYISVIQSI (129 aa). The DBB domain maps to 200–327; sequence VLPTEIPCEN…EIPYYEFQSL (128 aa). ANK repeat units follow at residues 342–371 and 378–408; these read ELPT…ATWA and EGSD…EIDI. Disordered regions lie at residues 433-480, 493-514, 538-578, and 606-625; these read PAFH…SESS, GADP…LPPP, QMER…EDPY, and FIIN…PPKE. The segment covering 553 to 568 has biased composition (basic and acidic residues); the sequence is ETGDEPKGEKEKKEEE. Residues 569–578 show a composition bias toward acidic residues; sequence KEQEEEEDPY. Over residues 611–621 the composition is skewed to pro residues; sequence PPAPTPRPTSI.

In terms of assembly, interacts with LYN, ITPR1 and ITPR2. In terms of processing, phosphorylated on tyrosines upon BCR activation. As to expression, expressed in B-cell but not T-cell or myeloid cell lines. Highest expression in CD19(+) B-cells, with very low expression in other cell populations.

Functionally, involved in B-cell receptor (BCR)-induced Ca(2+) mobilization from intracellular stores. Promotes Lyn-mediated phosphorylation of IP3 receptors 1 and 2. The chain is B-cell scaffold protein with ankyrin repeats (BANK1) from Homo sapiens (Human).